Consider the following 517-residue polypeptide: Crotonobetaine/carnitine--CoA ligase (517 aa).

Belongs to the ATP-dependent AMP-binding enzyme family.

It catalyses the reaction 4-(trimethylamino)butanoate + ATP + CoA = 4-(trimethylamino)butanoyl-CoA + AMP + diphosphate. The catalysed reaction is crotonobetaine + ATP + CoA = crotonobetainyl-CoA + AMP + diphosphate. It carries out the reaction (R)-carnitine + ATP + CoA = (R)-carnitinyl-CoA + AMP + diphosphate. Its pathway is amine and polyamine metabolism; carnitine metabolism. In terms of biological role, catalyzes the transfer of CoA to carnitine, generating the initial carnitinyl-CoA needed for the CaiB reaction cycle. Also has activity toward crotonobetaine and gamma-butyrobetaine. This Escherichia coli O6:K15:H31 (strain 536 / UPEC) protein is Crotonobetaine/carnitine--CoA ligase.